We begin with the raw amino-acid sequence, 154 residues long: 6,7-dimethyl-8-ribityllumazine synthase (154 aa).

5-amino-6-(D-ribitylamino)uracil contacts are provided by residues Trp22, Ala56 to Glu58, and Cys80 to Val82. Asp85–Thr86 contributes to the (2S)-2-hydroxy-3-oxobutyl phosphate binding site. His88 acts as the Proton donor in catalysis. Asn113 is a 5-amino-6-(D-ribitylamino)uracil binding site. Residue Arg127 coordinates (2S)-2-hydroxy-3-oxobutyl phosphate.

The protein belongs to the DMRL synthase family. As to quaternary structure, forms an icosahedral capsid composed of 60 subunits, arranged as a dodecamer of pentamers.

It catalyses the reaction (2S)-2-hydroxy-3-oxobutyl phosphate + 5-amino-6-(D-ribitylamino)uracil = 6,7-dimethyl-8-(1-D-ribityl)lumazine + phosphate + 2 H2O + H(+). It participates in cofactor biosynthesis; riboflavin biosynthesis; riboflavin from 2-hydroxy-3-oxobutyl phosphate and 5-amino-6-(D-ribitylamino)uracil: step 1/2. Its function is as follows. Catalyzes the formation of 6,7-dimethyl-8-ribityllumazine by condensation of 5-amino-6-(D-ribitylamino)uracil with 3,4-dihydroxy-2-butanone 4-phosphate. This is the penultimate step in the biosynthesis of riboflavin. In Xylella fastidiosa (strain 9a5c), this protein is 6,7-dimethyl-8-ribityllumazine synthase.